Here is a 221-residue protein sequence, read N- to C-terminus: 3-phospho-D-glycerate guanylyltransferase (221 aa).

Belongs to the CofC family.

It carries out the reaction (2R)-3-phosphoglycerate + GTP + H(+) = 3-[(R)-glyceryl]-diphospho-5'-guanosine + diphosphate. It catalyses the reaction (2S)-2-phospholactate + GTP + H(+) = (2S)-lactyl-2-diphospho-5'-guanosine + diphosphate. Its pathway is cofactor biosynthesis; coenzyme F420 biosynthesis. Functionally, guanylyltransferase that catalyzes the activation of (2R)-3-phosphoglycerate (3PG) as 3-[(R)-glyceryl]-diphospho-5'-guanosine, via the condensation of 3PG with GTP. It is involved in the biosynthesis of a derivative of the hydride carrier cofactor coenzyme F420, 3PG-F420. Can also use (2S)-2-phospholactate (2-PL), with lower turnover, and has weak activity with phosphoenolpyruvate (PEP). This chain is 3-phospho-D-glycerate guanylyltransferase, found in Mycetohabitans rhizoxinica (strain DSM 19002 / CIP 109453 / HKI 454) (Paraburkholderia rhizoxinica).